The sequence spans 230 residues: Putative N-acetylmannosamine-6-phosphate 2-epimerase (230 aa).

This sequence belongs to the NanE family.

It carries out the reaction an N-acyl-D-glucosamine 6-phosphate = an N-acyl-D-mannosamine 6-phosphate. The protein operates within amino-sugar metabolism; N-acetylneuraminate degradation; D-fructose 6-phosphate from N-acetylneuraminate: step 3/5. Functionally, converts N-acetylmannosamine-6-phosphate (ManNAc-6-P) to N-acetylglucosamine-6-phosphate (GlcNAc-6-P). The sequence is that of Putative N-acetylmannosamine-6-phosphate 2-epimerase from Malacoplasma penetrans (strain HF-2) (Mycoplasma penetrans).